The sequence spans 161 residues: UPF0262 protein Meso_0189 (161 aa).

It belongs to the UPF0262 family.

This Chelativorans sp. (strain BNC1) protein is UPF0262 protein Meso_0189.